The chain runs to 706 residues: Polyribonucleotide nucleotidyltransferase (706 aa).

Mg(2+) contacts are provided by Asp-486 and Asp-492. The KH domain maps to 552-611; it reads PRIIAMKINPEKIRDVIGKGGAVIRALTEETGTQIDIQEDGSVKIACTSMEAGELAKKRI. An S1 motif domain is found at 621-689; the sequence is GKVYEGPVIK…EKGRLRLSMK (69 aa).

Belongs to the polyribonucleotide nucleotidyltransferase family. Requires Mg(2+) as cofactor.

It localises to the cytoplasm. It carries out the reaction RNA(n+1) + phosphate = RNA(n) + a ribonucleoside 5'-diphosphate. In terms of biological role, involved in mRNA degradation. Catalyzes the phosphorolysis of single-stranded polyribonucleotides processively in the 3'- to 5'-direction. The sequence is that of Polyribonucleotide nucleotidyltransferase from Thiobacillus denitrificans (strain ATCC 25259 / T1).